The primary structure comprises 448 residues: NADP-specific glutamate dehydrogenase (448 aa).

Substrate-binding residues include Lys88, Gln109, and Lys112. Catalysis depends on Lys124, which acts as the Proton donor. Substrate is bound at residue Gly163. Positions 207 and 238 each coordinate NADP(+). A substrate-binding site is contributed by Ser381.

Belongs to the Glu/Leu/Phe/Val dehydrogenases family. Homohexamer.

The catalysed reaction is L-glutamate + NADP(+) + H2O = 2-oxoglutarate + NH4(+) + NADPH + H(+). Catalyzes the reversible oxidative deamination of glutamate to alpha-ketoglutarate and ammonia. The sequence is that of NADP-specific glutamate dehydrogenase (gdhA) from Helicobacter pylori (strain ATCC 700392 / 26695) (Campylobacter pylori).